Consider the following 555-residue polypeptide: Bicyclo-germacrene synthase (555 aa).

Mg(2+) is bound by residues D311 and E315. The DDXXD motif signature appears at 311–315 (DDTYE). Homodimerization stretches follow at residues 316–322 (YATLDEL) and 392–429 (EAKW…VGVG). Residues D459 and E467 each coordinate Mg(2+).

Belongs to the terpene synthase family. As to quaternary structure, homodimer. Mn(2+) serves as cofactor. Requires Mg(2+) as cofactor. In terms of tissue distribution, expressed in peltate glandular trichomes. Present at low levels in flowers, leaves and stems.

The catalysed reaction is (2E,6E)-farnesyl diphosphate = bicyclogermacrene + diphosphate. It catalyses the reaction (2E)-geranyl diphosphate = terpinolene + diphosphate. The enzyme catalyses (2E)-geranyl diphosphate = (4R)-limonene + diphosphate. It carries out the reaction (2E)-geranyl diphosphate + H2O = (2E)-geraniol + diphosphate. The catalysed reaction is (2E,6E)-farnesyl diphosphate = allo-aromadendrene + diphosphate. Its pathway is secondary metabolite biosynthesis; terpenoid biosynthesis. In terms of biological role, involved in the biosynthesis of phenolic sesquiterpenes natural products. Sesquiterpene synthase converting (2E,6E)-farnesyl diphosphate (FPP) to alloaromadendrene and bicyclo-germacrene. The product formation is dependent on the metal ions present and in presence of manganese, bicyclo-germacrene is greatly favored while both alloaromadendrene and bicyclo-germacrene are produced in equivalent amounts in the presence of magnesium. Can also convert geranyl diphosphate (GPP) to terpinolene, limonene and geraniol, and this conversion is not affected by the presence of magnesium or manganese. The protein is Bicyclo-germacrene synthase (TPS4) of Origanum vulgare (Wild marjoram).